A 753-amino-acid chain; its full sequence is A-kinase anchor protein 200 (753 aa).

Disordered regions lie at residues 1 to 345 (MGKA…QIEA), 462 to 482 (VETRSSSPPPPLPKSPPPSRV), 531 to 604 (TEQE…IDPA), 620 to 641 (VEKETGSISSNVAESSSVSDEQ), and 658 to 684 (VEETTEQETSDQQVISEEAHSDNDKEN). Glycine 2 carries the N-myristoyl glycine lipid modification. Composition is skewed to basic and acidic residues over residues 8 to 38 (RSIDITTDPKKVGEGDEVAGKVEKIDVDQKT) and 59 to 77 (AVEKKETEEHSENDKDLTT). Residues 81–93 (AAVAEGGDAVAET) are compositionally biased toward low complexity. Residues 119 to 148 (KSKSKKDKVKKKWSFRSISFGKKDKQKPAK) are F-actin binding. A compositionally biased stretch (basic residues) spans 120–132 (SKSKKDKVKKKWS). A phosphoserine mark is found at serine 132, serine 135, and serine 137. Basic and acidic residues predominate over residues 139-151 (GKKDKQKPAKSEE). A compositionally biased stretch (low complexity) spans 152–181 (ATSPTSGTTSPTTAEAEAAPAGDAAVAEPS). Residues 216–227 (EQEKQANGETEK) are compositionally biased toward basic and acidic residues. Low complexity predominate over residues 246–262 (EPATVTATESNTTATEE). The segment at 345-725 (ASSEVIETVT…AEQEGESNNK (381 aa)) is interaction with PKA-R2. The span at 468–480 (SPPPPLPKSPPPS) shows a compositional bias: pro residues. Positions 532–544 (EQEKQQEEAKVDS) are enriched in basic and acidic residues. Positions 545–561 (VPETIEESSSTVVVEEV) are enriched in low complexity. A compositionally biased stretch (basic and acidic residues) spans 578-594 (DVQKPIEDQDTPDEKES). Low complexity predominate over residues 626-638 (SISSNVAESSSVS). A compositionally biased stretch (basic and acidic residues) spans 674–684 (EEAHSDNDKEN).

In terms of assembly, homodimer. Interacts with Cam; interaction is calcium-dependent and is inhibited by PKC-mediated phosphorylation of Akap200. Interacts with N/Notch; the interaction stabilizes N/Notch protein levels by preventing Cbl-mediated ubiquitination and subsequent lysosomal degradation of N/Notch. Interacts with Pka-R2. Binds to F-actin; interaction is independent of myristoylation, but is inhibited by Akap200 phosphorylation and Cam binding. Isoform B: Does not bind to Pka-R2. Post-translationally, myristoylated; myristoylation promotes accumulation at the cell periphery. Phosphorylated; phosphorylation prevents binding to F-actin and Cam. In terms of tissue distribution, detected in the brain in both neurons and glia (including perineurial glia); specifically in the neuronal nuclei in the cortex and synaptic neuropil (at protein level). Detected in germline cells, somatic follicle cells and outer rim of the ring canals during oogenesis (at protein level). Isoform A: Detected in the adult (at protein level). Isoform B: Detected in the adult with higher levels in the head (at protein level).

It is found in the cytoplasm. It localises to the cytosol. The protein resides in the cell membrane. The protein localises to the cytoskeleton. Scaffolding protein involved in the regulation of PKA signaling and anchoring to the actin cytoskeleton integrating signals propagated by cAMP, diacylglycerol and calcium. Contributes to the maintenance and regulation of cytoskeletal structures in germline via PKA-mediated signaling. As part of ethanol response in the glia, mediates ethanol-induced structural remodeling of actin cytoskeleton and perineurial membrane topology by anchoring PKA to the membrane of perineurial glia. In specific tissues such as eye and thorax, promotes N/Notch protein stability by inhibiting Cbl-mediated ubiquitination and lysosomal degradation pathway of N/Notch in a PKA-independent way. In the circadian brain neurons evening cells (E-cells), might have a role in circadian pacemaker synchronization by playing a redundant role in signaling downstream of the G protein-couple receptor Pdfr. In Drosophila melanogaster (Fruit fly), this protein is A-kinase anchor protein 200.